The following is a 208-amino-acid chain: Uracil phosphoribosyltransferase (208 aa).

5-phospho-alpha-D-ribose 1-diphosphate-binding positions include Arg78, Arg103, and Asp130–Ser138. Residues Ile193 and Gly198–Ala200 each bind uracil. Position 199 (Asp199) interacts with 5-phospho-alpha-D-ribose 1-diphosphate.

The protein belongs to the UPRTase family. The cofactor is Mg(2+).

The catalysed reaction is UMP + diphosphate = 5-phospho-alpha-D-ribose 1-diphosphate + uracil. Its pathway is pyrimidine metabolism; UMP biosynthesis via salvage pathway; UMP from uracil: step 1/1. Its activity is regulated as follows. Allosterically activated by GTP. Its function is as follows. Catalyzes the conversion of uracil and 5-phospho-alpha-D-ribose 1-diphosphate (PRPP) to UMP and diphosphate. The sequence is that of Uracil phosphoribosyltransferase from Shewanella amazonensis (strain ATCC BAA-1098 / SB2B).